The primary structure comprises 153 residues: Prefoldin subunit alpha (153 aa).

Belongs to the prefoldin subunit alpha family. In terms of assembly, heterohexamer of two alpha and four beta subunits.

The protein localises to the cytoplasm. In terms of biological role, molecular chaperone capable of stabilizing a range of proteins. Seems to fulfill an ATP-independent, HSP70-like function in archaeal de novo protein folding. This is Prefoldin subunit alpha from Methanothrix thermoacetophila (strain DSM 6194 / JCM 14653 / NBRC 101360 / PT) (Methanosaeta thermophila).